Consider the following 817-residue polypeptide: Dynamin-related protein 5A (817 aa).

Over residues 1–20 (MANSNTYLTTPTKTPSSRRN) the composition is skewed to polar residues. The disordered stretch occupies residues 1–37 (MANSNTYLTTPTKTPSSRRNQQSQSKMQSHSKDPINA). The Dynamin-type G domain occupies 59–346 (KLPIPEIVAI…LQKRYKEAAP (288 aa)). Residues 69–76 (GGQSDGKS) form a G1 motif region. A GTP-binding site is contributed by 69 to 76 (GGQSDGKS). Residues 95-97 (GTR) are G2 motif. The G3 motif stretch occupies residues 175-178 (DTPG). Residues 175-179 (DTPGF) and 244-247 (SKFD) contribute to the GTP site. The interval 244 to 247 (SKFD) is G4 motif. Residues 280–283 (LPKD) are G5 motif. Disordered stretches follow at residues 405–425 (APEQWGKTTEEERGESGIGSW) and 616–658 (LSDT…ETPS). A compositionally biased stretch (basic and acidic residues) spans 618 to 629 (DTSRDEPMKDQE).

It belongs to the TRAFAC class dynamin-like GTPase superfamily. Dynamin/Fzo/YdjA family. As to expression, expressed in root and leaf meristems.

The protein resides in the cytoplasm. Its subcellular location is the cytoskeleton. It is found in the phragmoplast. Its function is as follows. Probable microtubule-associated force-producing protein that is targeted to the forming cell plate during cytokinesis. May play a role in cell division. The chain is Dynamin-related protein 5A (DRP5A) from Arabidopsis thaliana (Mouse-ear cress).